Reading from the N-terminus, the 670-residue chain is PML-RARA-regulated adapter molecule 1 (670 aa).

Residues 1–561 (MAHHLPAAME…PQQLPPMDPK (561 aa)) form a disordered region. The segment covering 31–43 (DLPKKPPKPEFGK) has biased composition (basic and acidic residues). 4 repeat units span residues 70–81 (KPPPPEVTDLPK), 82–93 (KPPPPEVTDLPK), 94–105 (KPPPPEVTDLPK), and 106–117 (KPPPPEVTDLPK). Residues 70 to 165 (KPPPPEVTDL…SLPEPGAPAR (96 aa)) are 4 X 12 AA repeats of K-P-P-[PQ]-P-[EQ]-[VAF]-T-D-L-P-K. The segment covering 114–129 (DLPKKPSKLELSDLSK) has biased composition (basic and acidic residues). S340 carries the post-translational modification Phosphoserine. The segment covering 386-398 (SSASESSLPAAVA) has biased composition (low complexity). Residues 454-463 (PAKPPLPPGP) are compositionally biased toward pro residues. A compositionally biased stretch (acidic residues) spans 504 to 514 (EIYELYDDVEP). Residues 515–528 (RDDSSPSPKGRDEA) are compositionally biased toward basic and acidic residues. Residues 571–649 (KAEREFRKKF…PRTALLPLET (79 aa)) enclose the SH3 domain.

In terms of assembly, interacts with SKAP2, LCP2 and DBNL. May interact with LYN. Interacts with NEK6. May be phosphorylated on tyrosines. As to expression, expressed in peripheral blood leukocytes and bone marrow. Expressed in monocytes, and to a lesser extent in granulocytes and lymphocytes. Not expressed in non hematopoietic tissues except in lung.

In terms of biological role, may be involved in myeloid differentiation. May be involved in integrin signaling in neutrophils. Binds to PtdIns(4)P. This is PML-RARA-regulated adapter molecule 1 (PRAM1) from Homo sapiens (Human).